The primary structure comprises 198 residues: Holliday junction resolvase RecU (198 aa).

Residues threonine 83, aspartate 85, glutamate 98, and glutamine 117 each coordinate Mg(2+).

Belongs to the RecU family. Mg(2+) serves as cofactor.

The protein resides in the cytoplasm. It carries out the reaction Endonucleolytic cleavage at a junction such as a reciprocal single-stranded crossover between two homologous DNA duplexes (Holliday junction).. In terms of biological role, endonuclease that resolves Holliday junction intermediates in genetic recombination. Cleaves mobile four-strand junctions by introducing symmetrical nicks in paired strands. Promotes annealing of linear ssDNA with homologous dsDNA. Required for DNA repair, homologous recombination and chromosome segregation. The sequence is that of Holliday junction resolvase RecU from Streptococcus thermophilus (strain CNRZ 1066).